The sequence spans 281 residues: Imidazoleglycerol-phosphate dehydratase, chloroplastic (281 aa).

The transit peptide at 1 to 85 directs the protein to the chloroplast; that stretch reads MELYAASHSL…TSLPFHPETR (85 aa). Residues glutamate 95, 121 to 129, 147 to 151, arginine 173, and arginine 195 contribute to the substrate site; these read HMLDQLASH and HHTNE. Residues histidine 121, histidine 147, histidine 148, and glutamate 151 each coordinate Mn(2+). 4 residues coordinate Mn(2+): histidine 219, histidine 243, histidine 244, and glutamate 247. Substrate-binding positions include 243–251 and 273–275; these read HHIIEATFK and SSK.

It belongs to the imidazoleglycerol-phosphate dehydratase family. Mn(2+) serves as cofactor.

The protein localises to the plastid. Its subcellular location is the chloroplast. The catalysed reaction is D-erythro-1-(imidazol-4-yl)glycerol 3-phosphate = 3-(imidazol-4-yl)-2-oxopropyl phosphate + H2O. It functions in the pathway amino-acid biosynthesis; L-histidine biosynthesis; L-histidine from 5-phospho-alpha-D-ribose 1-diphosphate: step 6/9. In Pisum sativum (Garden pea), this protein is Imidazoleglycerol-phosphate dehydratase, chloroplastic.